A 301-amino-acid chain; its full sequence is 4-diphosphocytidyl-2-C-methyl-D-erythritol kinase (301 aa).

Lys18 is an active-site residue. ATP is bound at residue 103–113; the sequence is PVAAGIGGGSA. Asp145 is a catalytic residue.

It belongs to the GHMP kinase family. IspE subfamily.

It carries out the reaction 4-CDP-2-C-methyl-D-erythritol + ATP = 4-CDP-2-C-methyl-D-erythritol 2-phosphate + ADP + H(+). It participates in isoprenoid biosynthesis; isopentenyl diphosphate biosynthesis via DXP pathway; isopentenyl diphosphate from 1-deoxy-D-xylulose 5-phosphate: step 3/6. Functionally, catalyzes the phosphorylation of the position 2 hydroxy group of 4-diphosphocytidyl-2C-methyl-D-erythritol. The polypeptide is 4-diphosphocytidyl-2-C-methyl-D-erythritol kinase (Bradyrhizobium sp. (strain BTAi1 / ATCC BAA-1182)).